A 276-amino-acid polypeptide reads, in one-letter code: Putative aliphatic sulfonates transport permease protein SsuC (276 aa).

7 helical membrane passes run 32-52 (GLLL…LGVV), 54-74 (ATVL…ILSG), 87-107 (AALG…LAGF), 119-141 (LQML…FGFD), 146-168 (ILLI…IRGV), 199-219 (ILLG…VAEL), and 242-262 (VFAG…FVRL). The 181-residue stretch at 80 to 260 (LQISIYRAAL…VVGKLTDSFV (181 aa)) folds into the ABC transmembrane type-1 domain.

The protein belongs to the binding-protein-dependent transport system permease family. CysTW subfamily.

It localises to the cell membrane. Functionally, part of a binding-protein-dependent transport system for aliphatic sulfonates. Probably responsible for the translocation of the substrate across the membrane. The protein is Putative aliphatic sulfonates transport permease protein SsuC (ssuC) of Bacillus subtilis (strain 168).